The chain runs to 310 residues: tRNA-cytidine(32) 2-sulfurtransferase (310 aa).

The PP-loop motif signature appears at 45-50 (SGGKDS). The [4Fe-4S] cluster site is built by C120, C123, and C211.

It belongs to the TtcA family. Homodimer. Requires Mg(2+) as cofactor. [4Fe-4S] cluster is required as a cofactor.

It localises to the cytoplasm. It carries out the reaction cytidine(32) in tRNA + S-sulfanyl-L-cysteinyl-[cysteine desulfurase] + AH2 + ATP = 2-thiocytidine(32) in tRNA + L-cysteinyl-[cysteine desulfurase] + A + AMP + diphosphate + H(+). Its pathway is tRNA modification. Functionally, catalyzes the ATP-dependent 2-thiolation of cytidine in position 32 of tRNA, to form 2-thiocytidine (s(2)C32). The sulfur atoms are provided by the cysteine/cysteine desulfurase (IscS) system. The sequence is that of tRNA-cytidine(32) 2-sulfurtransferase from Shewanella oneidensis (strain ATCC 700550 / JCM 31522 / CIP 106686 / LMG 19005 / NCIMB 14063 / MR-1).